A 58-amino-acid polypeptide reads, in one-letter code: MDTQKDVQPPKQQPMIYICGECHTENEIKSRDPIRCRECGYRIMYKKRTKRLVVFDAR.

4 residues coordinate Zn(2+): Cys19, Cys22, Cys36, and Cys39. Residues 19 to 39 form a C4-type zinc finger; the sequence is CGECHTENEIKSRDPIRCREC.

This sequence belongs to the archaeal Rpo12/eukaryotic RPC10 RNA polymerase subunit family. In terms of assembly, component of the RNA polymerase I (Pol I), RNA polymerase II (Pol II) and RNA polymerase III (Pol III) complexes consisting of at least 13, 12 and 17 subunits, respectively. Pol I complex consists of a ten-subunit catalytic core composed of POLR1A/RPA1, POLR1B/RPA2, POLR1C/RPAC1, POLR1D/RPAC2, POLR1H/RPA12, POLR2E/RPABC1, POLR2F/RPABC2, POLR2H/RPABC3, POLR2K/RPABC4 and POLR2L/RPABC5; a mobile stalk subunit POLR1F/RPA43 protruding from the core and additional subunits homologous to general transcription factors POLR1E/RPA49 and POLR1G/RPA34. Part of Pol I pre-initiation complex (PIC), in which Pol I core assembles with RRN3 and promoter-bound UTBF and SL1/TIF-IB complex. Pol II complex contains a ten-subunit catalytic core composed of POLR2A/RPB1, POLR2B/RPB2, POLR2C/RPB3, POLR2I/RPB9, POLR2J/RPB11, POLR2E/RPABC1, POLR2F/RPABC2, POLR2H/RPABC3, POLR2K/RPABC4 and POLR2L/RPABC5 and a mobile stalk composed of two subunits POLR2D/RPB4 and POLR2G/RPB7. Part of Pol II(G) complex, in which Pol II core associates with an additional subunit POLR2M; unlike conventional Pol II, Pol II(G) functions as a transcriptional repressor. Part of TBP-based Pol II pre-initiation complex (PIC), in which Pol II core assembles with general transcription factors and other specific initiation factors including GTF2E1, GTF2E2, GTF2F1, GTF2F2, TCEA1, ERCC2, ERCC3, GTF2H2, GTF2H3, GTF2H4, GTF2H5, GTF2A1, GTF2A2, GTF2B and TBP; this large multi-subunit PIC complex mediates DNA unwinding and targets Pol II core to the transcription start site where the first phosphodiester bond forms. Pol III complex consists of a ten-subunit catalytic core composed of POLR3A/RPC1, POLR3B/RPC2, POLR1C/RPAC1, POLR1D/RPAC2, POLR3K/RPC10, POLR2E/RPABC1, POLR2F/RPABC2, POLR2H/RPABC3, POLR2K/RPABC4 and POLR2L/RPABC5; a mobile stalk composed of two subunits POLR3H/RPC8 and CRCP/RPC9, protruding from the core and functioning primarily in transcription initiation; and additional subunits homologous to general transcription factors of the RNA polymerase II machinery, POLR3C/RPC3-POLR3F/RPC6-POLR3G/RPC7 heterotrimer required for transcription initiation and POLR3D/RPC4-POLR3E/RPC5 heterodimer involved in both transcription initiation and termination.

The protein resides in the nucleus. It localises to the nucleolus. Functionally, DNA-dependent RNA polymerase catalyzes the transcription of DNA into RNA using the four ribonucleoside triphosphates as substrates. Common component of RNA polymerases I, II and III which synthesize ribosomal RNA precursors, mRNA precursors and many functional non-coding RNAs, and a small RNAs, such as 5S rRNA and tRNAs, respectively. The sequence is that of DNA-directed RNA polymerases I, II, and III subunit RPABC4 (POLR2K) from Bos taurus (Bovine).